A 420-amino-acid chain; its full sequence is Homeobox-containing protein 1 (420 aa).

In terms of domain architecture, HNF-p1 spans 18-49 (DEPRFTIEQIDLLQRLRRTGMTKHEILHALET). The disordered stretch occupies residues 56–139 (EHSDKFGRRS…GKMSPTRYHA (84 aa)). Lys-60 is covalently cross-linked (Glycyl lysine isopeptide (Lys-Gly) (interchain with G-Cter in SUMO2)). 2 stretches are compositionally biased toward low complexity: residues 64–73 (RSSYGGSSYG) and 81–93 (ASSSTATASTQTQ). Over residues 94-132 (HSGMSPSPSNSYDTSPQPCTTNQNGRENNERLSTSNGKM) the composition is skewed to polar residues. Lys-131 is covalently cross-linked (Glycyl lysine isopeptide (Lys-Gly) (interchain with G-Cter in SUMO2)). In terms of domain architecture, POU-specific atypical spans 145–241 (RSYSFEASEE…PGATLSMRPA (97 aa)). Ser-148 bears the Phosphoserine mark. Residue Lys-161 forms a Glycyl lysine isopeptide (Lys-Gly) (interchain with G-Cter in SUMO2) linkage. At Ser-170 the chain carries Phosphoserine. Glycyl lysine isopeptide (Lys-Gly) (interchain with G-Cter in SUMO2) cross-links involve residues Lys-174, Lys-217, and Lys-310. Residues 267–341 (RRGSRFTWRK…NRRKEIKRRA (75 aa)) constitute a DNA-binding region (homeobox). Residues 353 to 385 (IDVQSPGGHSNSDDVDGNDYSEQDDSTSHSDHQ) are disordered. Acidic residues predominate over residues 365–377 (DDVDGNDYSEQDD). Lys-413 participates in a covalent cross-link: Glycyl lysine isopeptide (Lys-Gly) (interchain with G-Cter in SUMO1); alternate. Lys-413 participates in a covalent cross-link: Glycyl lysine isopeptide (Lys-Gly) (interchain with G-Cter in SUMO2); alternate.

Associates with the telomerase holoenzyme complex. Interacts with DKC1, XRCC6 and COIL. Ubiquitous. Detected in pancreas, brain, spleen, placenta, prostate, thymus, liver, heart, bone marrow, skeletal muscle, stomach, uterus, testis, kidney, ovary, colon, lung, cardiac muscle and thyroid gland.

The protein localises to the nucleus. It localises to the cytoplasm. Its subcellular location is the chromosome. The protein resides in the telomere. It is found in the cajal body. The protein localises to the PML body. In terms of biological role, binds directly to 5'-TTAGGG-3' repeats in telomeric DNA. Associates with the telomerase complex at sites of active telomere processing and positively regulates telomere elongation. Important for TERT binding to chromatin, indicating a role in recruitment of the telomerase complex to telomeres. Also plays a role in the alternative lengthening of telomeres (ALT) pathway in telomerase-negative cells where it promotes formation and/or maintenance of ALT-associated promyelocytic leukemia bodies (APBs). Enhances formation of telomere C-circles in ALT cells, suggesting a possible role in telomere recombination. Might also be involved in the DNA damage response at telomeres. This Homo sapiens (Human) protein is Homeobox-containing protein 1.